The sequence spans 171 residues: Der GTPase-activating protein YihI (171 aa).

2 disordered regions span residues 1–99 (MKKP…PQAE) and 145–171 (GLSYEDDEDDEEEEKQDDMMRLLKGGN). The segment covering 20–30 (TREELNQEARD) has biased composition (basic and acidic residues). A compositionally biased stretch (low complexity) spans 40-59 (HSAGSRANGSSASGSTAQNS). Over residues 148-160 (YEDDEDDEEEEKQ) the composition is skewed to acidic residues.

It belongs to the YihI family. In terms of assembly, interacts with Der.

A GTPase-activating protein (GAP) that modifies Der/EngA GTPase function. May play a role in ribosome biogenesis. This is Der GTPase-activating protein YihI from Enterobacter sp. (strain 638).